Reading from the N-terminus, the 140-residue chain is Sex-regulated protein janus-B (140 aa).

Position 42 (R42) interacts with substrate. The active-site Proton acceptor is the H69. A substrate-binding site is contributed by 110–112 (SRT).

The protein belongs to the janus family.

Its function is as follows. JanA and janB regulate somatic sex differentiation. The chain is Sex-regulated protein janus-B (janB) from Drosophila teissieri (Fruit fly).